The following is a 107-amino-acid chain: Iron-sulfur cluster assembly protein CyaY (107 aa).

Belongs to the frataxin family.

Its function is as follows. Involved in iron-sulfur (Fe-S) cluster assembly. May act as a regulator of Fe-S biogenesis. The polypeptide is Iron-sulfur cluster assembly protein CyaY (Enterobacter sp. (strain 638)).